The primary structure comprises 233 residues: Lysoplasmalogenase TMEM86B (233 aa).

The Cytoplasmic portion of the chain corresponds to 1–30 (MPCCDPYPWIGLNVGRLSSFPLLKYPQVRR). Residues 31 to 47 (WLAPFIVACSLYFLLWI) form a helical membrane-spanning segment. Over 48-53 (PEDQPS) the chain is Extracellular. Residues 54-75 (WVSALVKCQPILCLVLFLWAVA) traverse the membrane as a helical segment. The Cytoplasmic segment spans residues 76 to 81 (PGGSYT). The chain crosses the membrane as a helical span at residues 82–100 (WLLQGALTCSAVGDACLIW). Over 101–106 (PEAFFY) the chain is Extracellular. Residues 107-124 (GMAVFSVAHLLYLWAFGL) traverse the membrane as a helical segment. Topologically, residues 125 to 130 (SPLQPG) are cytoplasmic. Residues 131 to 147 (LLLCTTLASLTYYSFLL) form a helical membrane-spanning segment. The Extracellular portion of the chain corresponds to 148–153 (LHLEPN). A helical membrane pass occupies residues 154-170 (MVLPVAAYGLILNTMLW). The Cytoplasmic portion of the chain corresponds to 171–178 (RGLVLGRS). A helical membrane pass occupies residues 179–195 (AGWGAVLFIFSDGVLAW). Residues 196–206 (DTFVYTLPFAR) lie on the Extracellular side of the membrane. A helical membrane pass occupies residues 207–225 (LVTMSTYYAAQLLLTLSAL). Residues 226 to 233 (RSPGLKTH) are Cytoplasmic-facing.

It belongs to the TMEM86 family. In terms of assembly, homodimer.

It localises to the endoplasmic reticulum membrane. The protein localises to the cytoplasm. The catalysed reaction is a 1-O-(1Z-alkenyl)-sn-glycero-3-phosphocholine + H2O = a 2,3-saturated aldehyde + sn-glycerol 3-phosphocholine. It carries out the reaction a 1-O-(1Z-alkenyl)-sn-glycero-3-phosphoethanolamine + H2O = a 2,3-saturated aldehyde + sn-glycero-3-phosphoethanolamine. Its activity is regulated as follows. Competitively inhibited by lysophosphatidic acid. In terms of biological role, catalyzes the hydrolysis of the vinyl ether bond of choline or ethanolamine lysoplasmalogens, forming fatty aldehyde and glycerophosphocholine or glycerophosphoethanolamine, respectively and is specific for the sn-2-deacylated (lyso) form of plasmalogen. This is Lysoplasmalogenase TMEM86B (Tmem86b) from Rattus norvegicus (Rat).